A 542-amino-acid polypeptide reads, in one-letter code: 3-(3-hydroxy-phenyl)propionate/3-hydroxycinnamic acid hydroxylase (542 aa).

FAD is bound by residues S10 to R39 and F278 to D288.

This sequence belongs to the PheA/TfdB FAD monooxygenase family. The cofactor is FAD.

The enzyme catalyses 3-(3-hydroxyphenyl)propanoate + NADH + O2 + H(+) = 3-(2,3-dihydroxyphenyl)propanoate + NAD(+) + H2O. It carries out the reaction (2E)-3-(3-hydroxyphenyl)prop-2-enoate + NADH + O2 + H(+) = (2E)-3-(2,3-dihydroxyphenyl)prop-2-enoate + NAD(+) + H2O. Its pathway is aromatic compound metabolism; 3-phenylpropanoate degradation. Functionally, catalyzes the insertion of one atom of molecular oxygen into position 2 of the phenyl ring of 3-(3-hydroxyphenyl)propionate (3-HPP) and hydroxycinnamic acid (3HCI). The chain is 3-(3-hydroxy-phenyl)propionate/3-hydroxycinnamic acid hydroxylase from Burkholderia cenocepacia (strain HI2424).